A 375-amino-acid chain; its full sequence is Succinyl-diaminopimelate desuccinylase (375 aa).

Position 66 (His-66) interacts with Zn(2+). The active site involves Asp-68. A Zn(2+)-binding site is contributed by Asp-99. Glu-133 functions as the Proton acceptor in the catalytic mechanism. Positions 134, 162, and 348 each coordinate Zn(2+).

This sequence belongs to the peptidase M20A family. DapE subfamily. As to quaternary structure, homodimer. The cofactor is Zn(2+). It depends on Co(2+) as a cofactor.

The enzyme catalyses N-succinyl-(2S,6S)-2,6-diaminopimelate + H2O = (2S,6S)-2,6-diaminopimelate + succinate. Its pathway is amino-acid biosynthesis; L-lysine biosynthesis via DAP pathway; LL-2,6-diaminopimelate from (S)-tetrahydrodipicolinate (succinylase route): step 3/3. In terms of biological role, catalyzes the hydrolysis of N-succinyl-L,L-diaminopimelic acid (SDAP), forming succinate and LL-2,6-diaminopimelate (DAP), an intermediate involved in the bacterial biosynthesis of lysine and meso-diaminopimelic acid, an essential component of bacterial cell walls. This chain is Succinyl-diaminopimelate desuccinylase, found in Salmonella dublin (strain CT_02021853).